We begin with the raw amino-acid sequence, 432 residues long: Sonic hedgehog protein (432 aa).

An N-terminal signal peptide occupies residues 1 to 26 (MDEMILLRRVLLAGFICALLVPSGLS). A lipid anchor (N-palmitoyl cysteine) is attached at Cys27. The short motif at 35 to 41 (TRKRFKK) is the Cardin-Weintraub element. The Ca(2+) site is built by Glu92, Glu93, Asp98, Thr128, Glu129, Asp132, and Asp134. Residues His143, Asp150, and His185 each contribute to the Zn(2+) site. The Cholesterol glycine ester moiety is linked to residue Gly200.

This sequence belongs to the hedgehog family. In terms of assembly, interacts with HHATL/GUP1 which negatively regulates HHAT-mediated palmitoylation of the SHH N-terminus. Interacts with BOC and CDON. Interacts with HHIP. Interacts with DISP1 via its cholesterol anchor. Interacts with SCUBE2. Multimer. Post-translationally, the C-terminal domain displays an autoproteolysis activity and a cholesterol transferase activity. Both activities result in the cleavage of the full-length protein and covalent attachment of a cholesterol moiety to the C-terminal of the newly generated N-terminal fragment (ShhN). Cholesterylation is required for the sonic hedgehog protein N-product targeting to lipid rafts and multimerization. ShhN is the active species in both local and long-range signaling, whereas the C-product (ShhC) is degraded in the reticulum endoplasmic. N-palmitoylation by HHAT of ShhN is required for sonic hedgehog protein N-product multimerization and full activity. It is a prerequisite for the membrane-proximal positioning and the subsequent shedding of this N-terminal peptide. In terms of processing, the lipidated N- and C-terminal peptides of ShhNp can be cleaved (shedding). The N-terminal palmitoylated peptide is cleaved at the Cardin-Weintraub (CW) motif site. The cleavage reduced the interactions with heparan sulfate. The cleavage is enhanced by SCUBE2.

The protein localises to the endoplasmic reticulum membrane. Its subcellular location is the golgi apparatus membrane. It localises to the cell membrane. The enzyme catalyses glycyl-L-cysteinyl-[protein] + cholesterol + H(+) = [protein]-C-terminal glycyl cholesterol ester + N-terminal L-cysteinyl-[protein]. In terms of biological role, the C-terminal part of the sonic hedgehog protein precursor displays an autoproteolysis and a cholesterol transferase activity. Both activities result in the cleavage of the full-length protein into two parts (ShhN and ShhC) followed by the covalent attachment of a cholesterol moiety to the C-terminal of the newly generated ShhN. Both activities occur in the endoplasmic reticulum. Once cleaved, ShhC is degraded in the endoplasmic reticulum. Functionally, the dually lipidated sonic hedgehog protein N-product (ShhNp) is a morphogen which is essential for a variety of patterning events during development. Induces ventral cell fate in the neural tube and somites. Involved in the patterning of the anterior-posterior axis of the developing limb bud. Essential for axon guidance. Binds to the patched (PTCH1) receptor, which functions in association with smoothened (SMO), to activate the transcription of target genes. In the absence of SHH, PTCH1 represses the constitutive signaling activity of SMO. The protein is Sonic hedgehog protein of Cynops pyrrhogaster (Japanese fire-bellied newt).